Here is a 121-residue protein sequence, read N- to C-terminus: MAYNRKETGEFGEKLAAEYLKGMGYSIIQTNCRLPEGEIDIVGQDGEYLVFIEVRTKRRLGYGLPAESVTPRKKAHLMASAESYIQKHRLEHFPCRIDFVSVDLSQPEPRLELIKNALGEE.

Belongs to the UPF0102 family.

The polypeptide is UPF0102 protein DehaBAV1_0707 (Dehalococcoides mccartyi (strain ATCC BAA-2100 / JCM 16839 / KCTC 5957 / BAV1)).